The primary structure comprises 1032 residues: uncharacterized protein (1032 aa).

Over 1 to 17 (MYEEIRMKFTDIFIRRP) the chain is Cytoplasmic. A helical transmembrane segment spans residues 18 to 36 (VLAVSISLLMIILGLQAIS). At 37–337 (KLAVREYPKM…TIAINSSIHE (301 aa)) the chain is on the periplasmic side. A helical membrane pass occupies residues 338-357 (VIKTIGEATLIVLVVILMFI). Residues 358–363 (GSFRAI) lie on the Cytoplasmic side of the membrane. The helical transmembrane segment at 364 to 383 (LIPILAIPISLIGVLMLLQS) threads the bilayer. Topologically, residues 384–389 (FNFSIN) are periplasmic. A helical transmembrane segment spans residues 390–411 (LMTLLALILAIGLVVDDAIVVL). At 412–438 (ENIDRHIKAGETPFRAAIIGTREIAVP) the chain is on the cytoplasmic side. The helical transmembrane segment at 439–457 (VISMTIALIAVYSPMALMG) threads the bilayer. The Periplasmic portion of the chain corresponds to 458-470 (GITGTLFKEFALT). A helical transmembrane segment spans residues 471–493 (LAGAVFISGVVALTLSPMMSSKL). Over 494–529 (LKSNAKPTWMEERVEHTLGKVNRVYEYMLDLVMLNR) the chain is Cytoplasmic. Residues 530–548 (KSMLAFAVVIFSTLPFLFN) form a helical membrane-spanning segment. Residues 549–852 (SLSSELTPNE…ARQLVQEGNA (304 aa)) lie on the Periplasmic side of the membrane. The chain crosses the membrane as a helical span at residues 853 to 872 (LAVTFALAVIIIFLVLAIQF). The Cytoplasmic segment spans residues 873-878 (ESIRDP). A helical membrane pass occupies residues 879 to 898 (MVIMISVPLAVSGALVSLNI). The Periplasmic portion of the chain corresponds to 899–910 (LSFFSIAGTTLN). Residues 911–932 (IYSQVGLITLVGLITKHGILMC) form a helical membrane-spanning segment. Topologically, residues 933 to 960 (EVAKEEQLNHGKTRIEAITHAAKVRLRP) are cytoplasmic. The chain crosses the membrane as a helical span at residues 961 to 979 (ILMTTAAMVAGLIPLLYAT). Residues 980-992 (GAGAVSRFSIGIV) lie on the Periplasmic side of the membrane. The chain crosses the membrane as a helical span at residues 993–1015 (IVAGLSIGTIFTLFVLPVVYSYV). Residues 1016-1032 (ATEHKPLPVFDENKTTH) lie on the Cytoplasmic side of the membrane.

The protein belongs to the resistance-nodulation-cell division (RND) (TC 2.A.6) family.

The protein localises to the cell inner membrane. In terms of biological role, could be a drug efflux pump. This is an uncharacterized protein from Haemophilus influenzae (strain ATCC 51907 / DSM 11121 / KW20 / Rd).